The chain runs to 105 residues: uncharacterized protein (105 aa).

It is found in the cytoplasm. The protein localises to the nucleus. This is an uncharacterized protein from Schizosaccharomyces pombe (strain 972 / ATCC 24843) (Fission yeast).